A 101-amino-acid polypeptide reads, in one-letter code: MSQITEEQVKHVALLSKLEFSENEVKSFTDTFGKIIDMVEMLDEVDTDGVPFTMNVADNLNFMREDVAEKGLDREKLMAAVPEKEDGFIKVPAMLSDGGDA.

It belongs to the GatC family. In terms of assembly, heterotrimer of A, B and C subunits.

The catalysed reaction is L-glutamyl-tRNA(Gln) + L-glutamine + ATP + H2O = L-glutaminyl-tRNA(Gln) + L-glutamate + ADP + phosphate + H(+). It carries out the reaction L-aspartyl-tRNA(Asn) + L-glutamine + ATP + H2O = L-asparaginyl-tRNA(Asn) + L-glutamate + ADP + phosphate + 2 H(+). Allows the formation of correctly charged Asn-tRNA(Asn) or Gln-tRNA(Gln) through the transamidation of misacylated Asp-tRNA(Asn) or Glu-tRNA(Gln) in organisms which lack either or both of asparaginyl-tRNA or glutaminyl-tRNA synthetases. The reaction takes place in the presence of glutamine and ATP through an activated phospho-Asp-tRNA(Asn) or phospho-Glu-tRNA(Gln). This chain is Aspartyl/glutamyl-tRNA(Asn/Gln) amidotransferase subunit C, found in Lactococcus lactis subsp. cremoris (strain SK11).